Here is a 475-residue protein sequence, read N- to C-terminus: MSPQTETKASVGFKAGVKDYKLTYYTPEYETKDTDILAAFRVTPQPGVPPEEAGAAVAAESSTGTWTTVWTDGLTSLDRYKGRCYHIEPVAGEENQYICYVAYPLDLFEEGSVTNMFTSIVGNVFGFKALRALRLEDLRIPTAYVKTFQGPPHGIQVERDKLNKYGRPLLGCTIKPKLGLSAKNYGRAVYECLRGGLDFTKDDENVNSQPFMRWRDRFLFCAEAIYKSQAETGEIKGHYLNATAGTCEEMMKRAIFARELGVPIVMHDYLTGGFTANTSLAHYCRDNGLLLHIHRAMHAVIDRQKNHGIHFRVLAKALRMSGGDHIHSGTVVGKLEGERDITLGFVDLLRDDFIEKDRSRGIYFTQDWVSLPGVLPVASGGIHVWHMPALTEIFGDDSVLQFGGGTLGHPWGNAPGAVANRVALEACVQARNEGRDLAREGNEIIREACKWSPELAAACEVWKEIKFEFQAMDTL.

Positions 1-2 are excised as a propeptide; the sequence is MS. Residue Pro3 is modified to N-acetylproline. N6,N6,N6-trimethyllysine is present on Lys14. Substrate is bound by residues Asn123 and Thr173. Lys175 serves as the catalytic Proton acceptor. A substrate-binding site is contributed by Lys177. Mg(2+) contacts are provided by Lys201, Asp203, and Glu204. N6-carboxylysine is present on Lys201. Residue His294 is the Proton acceptor of the active site. Substrate-binding residues include Arg295, His327, and Ser379.

The protein belongs to the RuBisCO large chain family. Type I subfamily. As to quaternary structure, heterohexadecamer of 8 large chains and 8 small chains; disulfide-linked. The disulfide link is formed within the large subunit homodimers. It depends on Mg(2+) as a cofactor. Post-translationally, the disulfide bond which can form in the large chain dimeric partners within the hexadecamer appears to be associated with oxidative stress and protein turnover.

It is found in the plastid. Its subcellular location is the chloroplast. It carries out the reaction 2 (2R)-3-phosphoglycerate + 2 H(+) = D-ribulose 1,5-bisphosphate + CO2 + H2O. The catalysed reaction is D-ribulose 1,5-bisphosphate + O2 = 2-phosphoglycolate + (2R)-3-phosphoglycerate + 2 H(+). RuBisCO catalyzes two reactions: the carboxylation of D-ribulose 1,5-bisphosphate, the primary event in carbon dioxide fixation, as well as the oxidative fragmentation of the pentose substrate in the photorespiration process. Both reactions occur simultaneously and in competition at the same active site. In Oenothera argillicola (Appalachian evening primrose), this protein is Ribulose bisphosphate carboxylase large chain.